Consider the following 706-residue polypeptide: ATP-dependent zinc metalloprotease FtsH (706 aa).

The span at 1-17 shows a compositional bias: polar residues; sequence MAKNSLKPSNPYNSEPE. Residues 1-20 form a disordered region; sequence MAKNSLKPSNPYNSEPETPQ. Residues 1–24 are Cytoplasmic-facing; that stretch reads MAKNSLKPSNPYNSEPETPQPRPK. Residues 25-45 form a helical membrane-spanning segment; sequence LPMIYYVVVIALLIGLQLAFF. Topologically, residues 46–142 are periplasmic; that stretch reads WSGSSREIPY…RYEGSPGTTW (97 aa). The disordered stretch occupies residues 88–111; it reads GLPKQEEGNDTTRKLLPGAKTPEN. Residues 91–100 are compositionally biased toward basic and acidic residues; the sequence is KQEEGNDTTR. The chain crosses the membrane as a helical span at residues 143-163; sequence ISELIQWVLPFALLFGLYFFI. Over 164–706 the chain is Cytoplasmic; sequence FRRMGAGGPG…LRQSRNVSDN (543 aa). 239 to 246 is a binding site for ATP; that stretch reads GPPGTGKT. His462 lines the Zn(2+) pocket. Residue Glu463 is part of the active site. Positions 466 and 539 each coordinate Zn(2+). The tract at residues 641 to 681 is disordered; the sequence is RPGGQEEDSGEVDCSKKSAENGMVAHEPETTADAESTEKVG.

The protein in the central section; belongs to the AAA ATPase family. It in the C-terminal section; belongs to the peptidase M41 family. In terms of assembly, homohexamer. Requires Zn(2+) as cofactor.

Its subcellular location is the cell inner membrane. Its function is as follows. Acts as a processive, ATP-dependent zinc metallopeptidase for both cytoplasmic and membrane proteins. Plays a role in the quality control of integral membrane proteins. In Chlorobium luteolum (strain DSM 273 / BCRC 81028 / 2530) (Pelodictyon luteolum), this protein is ATP-dependent zinc metalloprotease FtsH.